The sequence spans 431 residues: Na(+)/H(+) antiporter NhaA 1 (431 aa).

The next 11 membrane-spanning stretches (helical) occupy residues 17 to 37 (LSGI…NSNF), 56 to 76 (FIIS…LFFL), 98 to 118 (MFPF…YIAL), 123 to 143 (FIGF…MLIL), 154 to 174 (LFLV…VATV), 182 to 202 (EYFL…YFDV), 209 to 229 (LFLG…ATIA), 301 to 321 (FSAF…LLDF), 329 to 349 (MIVL…IFGF), 373 to 393 (VGFI…LAFI), and 400 to 420 (AIKI…MILI).

The protein belongs to the NhaA Na(+)/H(+) (TC 2.A.33) antiporter family.

It is found in the cell inner membrane. The enzyme catalyses Na(+)(in) + 2 H(+)(out) = Na(+)(out) + 2 H(+)(in). In terms of biological role, na(+)/H(+) antiporter that extrudes sodium in exchange for external protons. In Aliarcobacter butzleri (strain RM4018) (Arcobacter butzleri), this protein is Na(+)/H(+) antiporter NhaA 1.